The chain runs to 510 residues: Gallate 1-beta-glucosyltransferase (510 aa).

His-19 acts as the Proton acceptor in catalysis. An anthocyanidin is bound at residue His-19. UDP-alpha-D-glucose is bound by residues Gln-343, His-358, Trp-361, Asn-362, Ser-363, and Glu-366. Residue Gly-381 coordinates an anthocyanidin. Residues Asp-382 and Gln-383 each contribute to the UDP-alpha-D-glucose site.

This sequence belongs to the UDP-glycosyltransferase family. In terms of tissue distribution, expressed in swelling buds and young leaves.

The catalysed reaction is 3,4,5-trihydroxybenzoate + UDP-alpha-D-glucose = 1-O-galloyl-beta-D-glucose + UDP. The enzyme catalyses vanillate + UDP-alpha-D-glucose = 1-O-(4-hydroxy-3-methoxybenzoyl)-beta-D-glucose + UDP. It carries out the reaction 3,4-dihydroxybenzoate + UDP-alpha-D-glucose = 1-O-(3,4-dihydroxy-benzoyl)-beta-D-glucose + UDP. In terms of biological role, glucosyltransferase that catalyzes the formation of 1-O-beta-D-glucose esters with hydroxybenzoic acids as preferred glucosyl acceptors. Has the highest activity with 3,4-dihydroxybenzoate, vanillate and gallate in vitro. Gallate is the predicted native substrate of the enzyme, which thus catalyzes the formation of 1-O-galloyl-beta-D-glucose, the first committed step of gallotannin biosynthesis. This chain is Gallate 1-beta-glucosyltransferase, found in Quercus robur (English oak).